A 493-amino-acid chain; its full sequence is FAD-linked oxidoreductase tazL (493 aa).

A signal peptide spans 1-17; the sequence is MRSNTVILAALPLVASA. 7 N-linked (GlcNAc...) asparagine glycosylation sites follow: asparagine 29, asparagine 41, asparagine 53, asparagine 91, asparagine 253, asparagine 318, and asparagine 387. One can recognise an FAD-binding PCMH-type domain in the interval 63-235; sequence WAEPTFAVTI…TSATYEIFDA (173 aa).

This sequence belongs to the oxygen-dependent FAD-linked oxidoreductase family.

It functions in the pathway secondary metabolite biosynthesis. FAD-linked oxidoreductase; part of the gene cluster that mediates the biosynthesis of azaterrilone A and other azaphilones, a class of fungal metabolites characterized by a highly oxygenated pyrano-quinone bicyclic core and exhibiting a broad range of bioactivities. The first step of the pathway begins with the non-reducing polyketide synthase tazA that assembles one acetyl-CoA starter unit, five malonyl-CoA units, and catalyzes a series of Claisen condensations, methylation, PT-mediated cyclization, and finally releases the first hexaketide precursor through the R-domain. The tazA product then undergoes reduction on its terminal ketone and the following pyran-ring formation by yet undetermined enzyme(s). Dehydration and enoyl reduction, possibly involving the trans-enoyl reductase tazE leads to the next intermediate. TazD is predicted as an acetyltransferase and might catalyze the acetylation steps leading to the synthesis of azaterrilone A. Azaterrilone A is not the final product of the taz pathway and both the highly reducing polyketide synthase tazB and the dual enzyme tazHJ catalyze late steps of the pathway, leading to the production of the 2 final stereoisomers that contain additional polyketide modification whose structures have still to be determined. This is FAD-linked oxidoreductase tazL from Aspergillus terreus (strain NIH 2624 / FGSC A1156).